Consider the following 1111-residue polypeptide: NBPF family member NBPF9 (1111 aa).

The stretch at 70 to 130 (MLRNERQFKE…RSLNEHLQAL (61 aa)) forms a coiled coil. A disordered region spans residues 161–198 (KLSPENDEDEDEDVQVEEDEKVLESSAPREVQKAEESK). Over residues 165–181 (ENDEDEDEDVQVEEDEK) the composition is skewed to acidic residues. The 95-residue stretch at 165–259 (ENDEDEDEDV…ECQDALNILP (95 aa)) folds into the Olduvai 1 domain. Residues 341 to 401 (MLRNERQFKE…RSLNEHLQAL (61 aa)) are a coiled coil. Olduvai domains are found at residues 436–528 (ENDN…HIIP), 529–600 (ENES…VDIG), 601–692 (RHRW…PSCP), 695–750 (SREL…LDLD), 751–843 (RIKK…RSKK), 844–919 (KRRR…LDVD), 920–1012 (RIKK…RSKK), and 1013–1111 (ERRR…IFPQ). 2 disordered regions span residues 451 to 474 (EKVQKSSAPREMQKAEEKEVPEDS) and 510 to 569 (TLIG…STPS). Acidic residues-rich tracts occupy residues 530–539 (NESDDEEEEE) and 550–562 (ESEEEEVPQESWD). Disordered regions lie at residues 829–871 (KKGK…LDEK) and 999–1033 (KGKGKKRRGRRSKKERRRGRKEGEEDQNPPCPRLN). 2 stretches are compositionally biased toward basic residues: residues 831–849 (GKGKKRRGRRSKKKRRRGR) and 1000–1018 (GKGKKRRGRRSKKERRRGR).

It belongs to the NBPF family. Expressed in a neuroblastoma cell line.

The protein resides in the cytoplasm. This Homo sapiens (Human) protein is NBPF family member NBPF9.